The sequence spans 123 residues: Galanin peptides (123 aa).

The signal sequence occupies residues 1–19 (MPRGCALLLASLLLASALS). A propeptide spanning residues 20-30 (ATLGLGSPVKE) is cleaved from the precursor. An Alanine amide modification is found at Ala-61. Ser-116 and Ser-117 each carry phosphoserine.

The protein belongs to the galanin family.

The protein localises to the secreted. Endocrine hormone of the central and peripheral nervous systems that binds and activates the G protein-coupled receptors GALR1, GALR2, and GALR3. This small neuropeptide may regulate diverse physiologic functions including contraction of smooth muscle of the gastrointestinal and genitourinary tract, growth hormone and insulin release and adrenal secretion. This chain is Galanin peptides (GAL), found in Sus scrofa (Pig).